Reading from the N-terminus, the 490-residue chain is Allantoin permease (490 aa).

12 consecutive transmembrane segments (helical) span residues 36–56 (IWMGCIHNIPTYATVGGLIAI), 60–80 (PWQVLAIIITASLILFGALAL), 116–136 (AIMWLGIQTFAGSTALNILLL), 151–171 (ILGIHLSGLLSFVFFWAIHLL), 190–210 (LVYLVFGGMVWWAVDIAGGLG), 225–245 (TFWPFAAGVTGIIGIWATLIL), 265–285 (FYGLPGTFALFAFASITVTSG), 308–328 (YVIVLSVITLCIATISVNVAA), 350–370 (GSFITALLALFTVPWKLMESA), 373–393 (VYAFLGLIGGMLGPVAGVMMA), 425–445 (AFAATMLGALISLIGMYVPVL), and 448–468 (LYDISWFVGVLISFLFYIVLM).

This sequence belongs to the purine-cytosine permease (2.A.39) family.

The protein resides in the cell membrane. It catalyses the reaction (S)-allantoin(in) + H(+)(in) = (S)-allantoin(out) + H(+)(out). Functionally, uptake of allantoin into the cell. Allantoin uptake is not dependent on sodium, and PucI is likely to be a proton-coupled symporter. Shows highest recognition for binding of allantoin, good recognition for binding of hydantoin, L-5-benzylhydantoin and 5-hydroxyhydantoin, and to a lesser extent for a range of nucleobases and nucleosides. This Bacillus subtilis (strain 168) protein is Allantoin permease.